A 318-amino-acid polypeptide reads, in one-letter code: Ankyrin repeat and SOCS box protein 7 (318 aa).

7 ANK repeats span residues 13-42 (QEEL…SPNG), 46-75 (NGWT…DPTV), 80-109 (GGFT…RSDI), 116-145 (DGWT…EVDP), 149-178 (KGTT…NIDI), 180-208 (NGFL…DTNL), and 213-242 (DGQT…DTNT). The region spanning 265–318 (LDFLQDVTRQPRTLQDLCRIKIRQCIGLQNLKLLDELPIAKVMKDYLKHKFDDI) is the SOCS box domain.

It belongs to the ankyrin SOCS box (ASB) family. As to quaternary structure, interacts with CUL5. Interacts with RNF7. Interacts with PSRC1.

It is found in the nucleus. The protein resides in the cytoplasm. The protein operates within protein modification; protein ubiquitination. Probable substrate-recognition component of a SCF-like ECS (Elongin-Cullin-SOCS-box protein) E3 ubiquitin-protein ligase complex which mediates the ubiquitination and subsequent proteasomal degradation of target proteins. Plays a role in spindle dynamics and genome integrity by targeting the mitotic progression protein PSRC1 for proteasomal degradation in a cell cycle-dependent manner. Also participates in meiosis by mediating the proper attachment between kinetochores and microtubules. The polypeptide is Ankyrin repeat and SOCS box protein 7 (Asb7) (Mus musculus (Mouse)).